The following is a 172-amino-acid chain: MLKVLGIDPGSRFTGYGVVEWGGGKPRYVASGCIRVTGETLAERLRCIYLGVTQVVSMYAPDEAAIEQVFMARNADSALKLGQARGVAILAMAEQGLQVAEYSAKKVKQSVVGKGNAEKWQVQHMMQAMLDLQAKPQADAADALAIAVCHLHTQQSLMRIGSVSSSRRGRMR.

Residues Asp-8, Glu-67, and Asp-139 contribute to the active site. Positions 8, 67, and 139 each coordinate Mg(2+).

The protein belongs to the RuvC family. In terms of assembly, homodimer which binds Holliday junction (HJ) DNA. The HJ becomes 2-fold symmetrical on binding to RuvC with unstacked arms; it has a different conformation from HJ DNA in complex with RuvA. In the full resolvosome a probable DNA-RuvA(4)-RuvB(12)-RuvC(2) complex forms which resolves the HJ. Requires Mg(2+) as cofactor.

It localises to the cytoplasm. The catalysed reaction is Endonucleolytic cleavage at a junction such as a reciprocal single-stranded crossover between two homologous DNA duplexes (Holliday junction).. Its function is as follows. The RuvA-RuvB-RuvC complex processes Holliday junction (HJ) DNA during genetic recombination and DNA repair. Endonuclease that resolves HJ intermediates. Cleaves cruciform DNA by making single-stranded nicks across the HJ at symmetrical positions within the homologous arms, yielding a 5'-phosphate and a 3'-hydroxyl group; requires a central core of homology in the junction. The consensus cleavage sequence is 5'-(A/T)TT(C/G)-3'. Cleavage occurs on the 3'-side of the TT dinucleotide at the point of strand exchange. HJ branch migration catalyzed by RuvA-RuvB allows RuvC to scan DNA until it finds its consensus sequence, where it cleaves and resolves the cruciform DNA. The polypeptide is Crossover junction endodeoxyribonuclease RuvC (Hahella chejuensis (strain KCTC 2396)).